The following is a 454-amino-acid chain: Mitochondrial dynamics protein MID49 (454 aa).

Residues M1 to D22 are Mitochondrial intermembrane-facing. Residues F23–A43 form a helical membrane-spanning segment. Residues T44 to F454 are Cytoplasmic-facing. Residues A76–T113 form a disordered region.

The protein belongs to the MID49/MID51 family. As to quaternary structure, interacts with DNM1L.

Its subcellular location is the mitochondrion outer membrane. In terms of biological role, mitochondrial outer membrane protein which regulates mitochondrial organization. It is required for mitochondrial fission and promotes the recruitment and association of the fission mediator dynamin-related protein 1 (DNM1L) to the mitochondrial surface independently of the mitochondrial fission FIS1 and MFF proteins. Regulates DNM1L GTPase activity. In Mus musculus (Mouse), this protein is Mitochondrial dynamics protein MID49 (Mief2).